The chain runs to 285 residues: Golgi phosphoprotein 3-like (285 aa).

The tract at residues methionine 1–aspartate 43 is disordered. The segment covering arginine 10–aspartate 43 has biased composition (basic and acidic residues). A 1,2-diacyl-sn-glycero-3-phospho-(1D-myo-inositol 4-phosphate) contacts are provided by tryptophan 67 and arginine 76. Serine 112 is subject to Phosphoserine. A 1,2-diacyl-sn-glycero-3-phospho-(1D-myo-inositol 4-phosphate) contacts are provided by arginine 157 and arginine 160. The segment at glutamate 176–threonine 187 is beta-hairpin required for oligomerization.

Belongs to the GOLPH3/VPS74 family. As to quaternary structure, homooligomer. Does not interact MYO18; differs from GOLPH3 by its inability to interact with MYO18. May interact with ARF1.

Its subcellular location is the golgi apparatus. The protein resides in the golgi stack membrane. It is found in the trans-Golgi network membrane. Its function is as follows. Phosphatidylinositol-4-phosphate-binding protein that may antagonize the action of GOLPH3 which is required for the process of vesicle budding at the Golgi and anterograde transport to the plasma membrane. The protein is Golgi phosphoprotein 3-like (Golph3l) of Rattus norvegicus (Rat).